The sequence spans 168 residues: RNA pyrophosphohydrolase (168 aa).

A Nudix hydrolase domain is found at 8 to 160; that stretch reads PYRPCVGLAI…KRQVYERVAR (153 aa). Residues 47-68 carry the Nudix box motif; it reads GGIDKGEEPYEAALRELYEETS.

This sequence belongs to the Nudix hydrolase family. RppH subfamily. The cofactor is a divalent metal cation.

Functionally, accelerates the degradation of transcripts by removing pyrophosphate from the 5'-end of triphosphorylated RNA, leading to a more labile monophosphorylated state that can stimulate subsequent ribonuclease cleavage. The polypeptide is RNA pyrophosphohydrolase (Azorhizobium caulinodans (strain ATCC 43989 / DSM 5975 / JCM 20966 / LMG 6465 / NBRC 14845 / NCIMB 13405 / ORS 571)).